The chain runs to 617 residues: Proline--tRNA ligase (617 aa).

Belongs to the class-II aminoacyl-tRNA synthetase family. ProS type 1 subfamily. As to quaternary structure, homodimer.

It localises to the cytoplasm. The catalysed reaction is tRNA(Pro) + L-proline + ATP = L-prolyl-tRNA(Pro) + AMP + diphosphate. In terms of biological role, catalyzes the attachment of proline to tRNA(Pro) in a two-step reaction: proline is first activated by ATP to form Pro-AMP and then transferred to the acceptor end of tRNA(Pro). As ProRS can inadvertently accommodate and process non-cognate amino acids such as alanine and cysteine, to avoid such errors it has two additional distinct editing activities against alanine. One activity is designated as 'pretransfer' editing and involves the tRNA(Pro)-independent hydrolysis of activated Ala-AMP. The other activity is designated 'posttransfer' editing and involves deacylation of mischarged Ala-tRNA(Pro). The misacylated Cys-tRNA(Pro) is not edited by ProRS. The chain is Proline--tRNA ligase from Streptococcus agalactiae serotype III (strain NEM316).